Reading from the N-terminus, the 357-residue chain is UPF0283 membrane protein BMEA_A1074 (357 aa).

A disordered region spans residues 1–36 (MSDKTPRKPTAFRLEQPARVSAASEQEEPRRPRAVK). A compositionally biased stretch (basic and acidic residues) spans 27–36 (EEPRRPRAVK). Helical transmembrane passes span 78–98 (ILFG…TEDL) and 109–129 (LGWT…AIIL).

The protein belongs to the UPF0283 family.

Its subcellular location is the cell inner membrane. The protein is UPF0283 membrane protein BMEA_A1074 of Brucella melitensis biotype 2 (strain ATCC 23457).